The following is a 273-amino-acid chain: Zinc finger protein 32 (273 aa).

3 consecutive C2H2-type zinc fingers follow at residues 77–99 (YECQ…ERIH), 105–127 (FECT…QRIH), and 133–155 (YQCK…ERLH). Cys-79, Cys-82, His-95, His-99, Cys-107, Cys-110, His-123, His-127, Ser-141, Gln-144, Gly-157, Tyr-161, Phe-198, Lys-201, Leu-214, Ala-218, Cys-247, Cys-250, His-263, and Cys-267 together coordinate Zn(2+). C2H2-type zinc fingers lie at residues 161–183 (YECA…RRVH) and 189–211 (YRCD…IRVH). The C2H2-type 6 zinc-finger motif lies at 217–239 (YACTQCRKSFHTRGNCILHGKIH). Residues 245-267 (YLCGQCGKSFTQRGSLAVHQRSC) form a CCHC-type zinc finger.

It belongs to the krueppel C2H2-type zinc-finger protein family.

It localises to the nucleus. Functionally, may be involved in transcriptional regulation. The protein is Zinc finger protein 32 (ZNF32) of Homo sapiens (Human).